We begin with the raw amino-acid sequence, 255 residues long: Probable iron chelatin transport ATP-binding protein jhp_0821 (255 aa).

The ABC transporter domain occupies 3–240 (LEVKNLSFKY…HNLSALYDTP (238 aa)). 35–42 (APNGSGKT) contributes to the ATP binding site.

The protein belongs to the ABC transporter superfamily.

The protein localises to the cell inner membrane. Its function is as follows. Part of a binding-protein-dependent transport system for an iron chelatin. Probably responsible for energy coupling to the transport system (Potential). The chain is Probable iron chelatin transport ATP-binding protein jhp_0821 from Helicobacter pylori (strain J99 / ATCC 700824) (Campylobacter pylori J99).